Reading from the N-terminus, the 636-residue chain is MTMSVETQKETLGFQTEVKQLLHLMIHSLYSNKEIFLRELISNASDAVDKLRFEALSKPELLEGGAELKIRVSFDKDAKTVTLEDNGIGMSREDAITHLGTIAKSGTADFMKNLSGDQKKDSHLIGQFGVGFYSAFIVADKVEVFSRRAGLDASEGVHWSSKGEGEFEIATVDKADRGTRIVLHLKDGEDEFADGWRLRNIVKKYSDHIALPIELPKEQAAAEGEETPAQEWEVVNRASALWTRPRTEIKDEEYQEFYKHIGHDYENPLSWSHNKVEGKLEYSSLLYVPARAPFDLYQREAPKGLKLYVQRVFVMDQAESFLPLYLRFIKGVVDSNDLSLNVSREILQKDPIIDSMKSALTKRVLDMLEKLAKNEPEQYKGFWKNFGQVMKEGPAEDFANKEKIAGLLRFASTQGDDGEQVVSLAEYLARAKEGQDKIYYLTGETYAQVKNSPHLEVFRKKGIEVLLLTDRIDEWLMSYLNEFDGKSFVDVARGDLDLGNLDSEEEKKEAEEVAKSKEGLVERIKASLGDAVSEVRVSHRLTDSPAILAIGEQDLGMQMRQILEASGQKVPDSKPIFEFNPAHPLIEKLDGEQSEERFGDLSHILFDQAALAAGDSLKDPAAYVRRLNKLLVELSV.

Residues 1–344 are a; substrate-binding; that stretch reads MTMSVETQKE…SNDLSLNVSR (344 aa). The tract at residues 345–561 is b; sequence EILQKDPIID…EQDLGMQMRQ (217 aa). Residues 562–636 form a c region; the sequence is ILEASGQKVP…LNKLLVELSV (75 aa).

It belongs to the heat shock protein 90 family. As to quaternary structure, homodimer.

It is found in the cytoplasm. In terms of biological role, molecular chaperone. Has ATPase activity. The protein is Chaperone protein HtpG of Pseudomonas fluorescens (strain SBW25).